The sequence spans 477 residues: Actin-related protein 7 (477 aa).

Belongs to the actin family. In terms of assembly, forms a heterodimer with ARP9. Interacts with NPL6. Component of the two forms of the RSC complex composed of at least either RSC1 or RSC2, and ARP7, ARP9, LDB7, NPL6, RSC3, RSC30, RSC4, RSC58, RSC6, RSC8, RSC9, SFH1, STH1, HTL1 and probably RTT102. The complexes interact with histone and histone variant components of centromeric chromatin. Component of the SWI/SNF global transcription activator complex. The 1.14 MDa SWI/SNF complex is composed of 11 different subunits: one copy each of SWI1, SNF2/SWI2, SNF5, SNF12/SWP73, ARP7/SWP61, ARP9/SWP59; two copies each of SWI3, SNF6, SNF11, SWP82; and three copies of TAF14/SWP29.

It localises to the nucleus. In terms of biological role, component of the chromatin structure remodeling complex (RSC), which is involved in transcription regulation and nucleosome positioning. RSC is responsible for the transfer of a histone octamer from a nucleosome core particle to naked DNA. The reaction requires ATP and involves an activated RSC-nucleosome intermediate. Remodeling reaction also involves DNA translocation, DNA twist and conformational change. As a reconfigurer of centromeric and flanking nucleosomes, RSC complex is required both for proper kinetochore function in chromosome segregation and, via a PKC1-dependent signaling pathway, for organization of the cellular cytoskeleton. This subunit is involved in transcriptional regulation. Heterodimer of ARP7 and ARP9 functions with HMG box proteins to facilitate proper chromatin architecture. Heterodimer formation is necessary for assembly into RSC complex. Part of the SWI/SNF complex, an ATP-dependent chromatin remodeling complex, is required for the positive and negative regulation of gene expression of a large number of genes. It changes chromatin structure by altering DNA-histone contacts within a nucleosome, leading eventually to a change in nucleosome position, thus facilitating or repressing binding of gene-specific transcription factors. This is Actin-related protein 7 (ARP7) from Saccharomyces cerevisiae (strain ATCC 204508 / S288c) (Baker's yeast).